The sequence spans 179 residues: Apoptosis regulator Bcl-2 homolog (179 aa).

A BH1 motif is present at residues 76-95 (ELFKDLINWGRICGFIVFSA). Positions 126–141 (PWMISHGGQEEFLAFS) match the BH2 motif.

It belongs to the Bcl-2 family. Interacts with host BECN1 (via BH3 homology domain); this interaction allows the virus to inhibit BECN1, and thus autophagy. Interacts with host BID. Interacts with host BAX.

The protein resides in the host mitochondrion. The protein localises to the host endoplasmic reticulum. In terms of biological role, suppresses apoptosis in host cell to promote the viral replication. Has the ability to potentially bind to all the members of the proapoptotic Bcl-2 family. Inhibits autophagy by interacting with host Beclin 1 (BECN1). This chain is Apoptosis regulator Bcl-2 homolog, found in African swine fever virus (isolate Pig/Kenya/KEN-50/1950) (ASFV).